A 358-amino-acid chain; its full sequence is Serine/threonine-protein phosphatase 2A activator 2 (358 aa).

The protein belongs to the PTPA-type PPIase family.

Its subcellular location is the cytoplasm. The enzyme catalyses [protein]-peptidylproline (omega=180) = [protein]-peptidylproline (omega=0). In terms of biological role, PPIases accelerate the folding of proteins. It catalyzes the cis-trans isomerization of proline imidic peptide bonds in oligopeptides. Acts as a regulatory subunit for PP2A-like phosphatases modulating their activity or substrate specificity, probably by inducing a conformational change in the catalytic subunit, a direct target of the PPIase. Can reactivate inactive phosphatase PP2A-phosphatase methylesterase complexes (PP2Ai) in presence of ATP and Mg(2+) by dissociating the inactive form from the complex. This Candida albicans (strain SC5314 / ATCC MYA-2876) (Yeast) protein is Serine/threonine-protein phosphatase 2A activator 2 (RRD2).